We begin with the raw amino-acid sequence, 545 residues long: Glucose-6-phosphate isomerase (545 aa).

Catalysis depends on E351, which acts as the Proton donor. Catalysis depends on residues H382 and K510.

The protein belongs to the GPI family.

It localises to the cytoplasm. It carries out the reaction alpha-D-glucose 6-phosphate = beta-D-fructose 6-phosphate. It functions in the pathway carbohydrate biosynthesis; gluconeogenesis. Its pathway is carbohydrate degradation; glycolysis; D-glyceraldehyde 3-phosphate and glycerone phosphate from D-glucose: step 2/4. Its function is as follows. Catalyzes the reversible isomerization of glucose-6-phosphate to fructose-6-phosphate. In Shewanella baltica (strain OS185), this protein is Glucose-6-phosphate isomerase.